A 178-amino-acid polypeptide reads, in one-letter code: Disulfide bond formation protein B (178 aa).

The Cytoplasmic portion of the chain corresponds to 1–14; that stretch reads MLSFFKTLSMGRSG. Residues 15–31 traverse the membrane as a helical segment; the sequence is WLLLAFSALVLELVALY. Residues 32–49 lie on the Periplasmic side of the membrane; it reads FQYGMQLQPCVMCVYERV. The cysteines at positions 41 and 44 are disulfide-linked. Residues 50–65 form a helical membrane-spanning segment; sequence ALGGILFAGIIGAIAP. Residues 66–72 are Cytoplasmic-facing; it reads SSWFFRF. A helical transmembrane segment spans residues 73–90; it reads LGIIIGLGASVKGFLLAL. At 91–145 the chain is on the periplasmic side; that stretch reads KHVDYQLNPAPWNQCAYLPEFPQTLPLDQWFPYLFKPIGSCSDIQWSFLGFSMAQ. An intrachain disulfide couples C105 to C131. Residues 146-164 traverse the membrane as a helical segment; sequence WILVMFAFYSILLAIILIS. Topologically, residues 165–178 are cytoplasmic; that stretch reads QVKAGKPKHREIFR.

This sequence belongs to the DsbB family.

The protein localises to the cell inner membrane. In terms of biological role, required for disulfide bond formation in some periplasmic proteins. Acts by oxidizing the DsbA protein. The chain is Disulfide bond formation protein B from Mannheimia succiniciproducens (strain KCTC 0769BP / MBEL55E).